The sequence spans 276 residues: Tryptophan synthase alpha chain (276 aa).

Active-site proton acceptor residues include E49 and D60.

Belongs to the TrpA family. As to quaternary structure, tetramer of two alpha and two beta chains.

The enzyme catalyses (1S,2R)-1-C-(indol-3-yl)glycerol 3-phosphate + L-serine = D-glyceraldehyde 3-phosphate + L-tryptophan + H2O. It functions in the pathway amino-acid biosynthesis; L-tryptophan biosynthesis; L-tryptophan from chorismate: step 5/5. Its function is as follows. The alpha subunit is responsible for the aldol cleavage of indoleglycerol phosphate to indole and glyceraldehyde 3-phosphate. The polypeptide is Tryptophan synthase alpha chain (Acidiphilium cryptum (strain JF-5)).